The primary structure comprises 555 residues: MAARLLLLGILLLLLPLPVPAPCHTAARSECKRSHKFVPGAWLAGEGVDVTSLRRSGSFPVDTQRFLRPDGTCTLCENALQEGTLQRLPLALTNWRAQGSGCQRHVTRAKVSSTEAVARDAARSIRNDWKVGLDVTPKPTSNVHVSVAGSHSQAANFAAQKTHQDQYSFSTDTVECRFYSFHVVHTPPLHPDFKRALGDLPHHFNASTQPAYLRLISNYGTHFIRAVELGGRISALTALRTCELALEGLTDNEVEDCLTVEAQVNIGIHGSISAEAKACEEKKKKHKMTASFHQTYRERHSEVVGGHHTSINDLLFGIQAGPEQYSAWVNSLPGSPGLVDYTLEPLHVLLDSQDPRREALRRALSQYLTDRARWRDCSRPCPPGRQKSPRDPCQCVCHGSAVTTQDCCPRQRGLAQLEVTFIQAWGLWGDWFTATDAYVKLFFGGQELRTSTVWDNNNPIWSVRLDFGDVLLATGGPLRLQVWDQDSGRDDDLLGTCDQAPKSGSHEVRCNLNHGHLKFRYHARCLPHLGGGTCLDYVPQMLLGEPPGNRSGAVW.

The N-terminal stretch at 1 to 21 (MAARLLLLGILLLLLPLPVPA) is a signal peptide. Disulfide bonds link Cys-23–Cys-76, Cys-31–Cys-73, and Cys-102–Cys-176. The MACPF domain maps to 27-375 (ARSECKRSHK…QYLTDRARWR (349 aa)). A beta stranded membrane pass occupies residues 129 to 149 (WKVGLDVTPKPTSNVHVSVAG). Residue Asn-205 is glycosylated (N-linked (GlcNAc...) asparagine). 4 disulfides stabilise this stretch: Cys-242–Cys-408, Cys-377–Cys-393, Cys-381–Cys-395, and Cys-397–Cys-407. Residues 257 to 279 (CLTVEAQVNIGIHGSISAEAKAC) traverse the membrane as a beta stranded segment. Residues 376-408 (DCSRPCPPGRQKSPRDPCQCVCHGSAVTTQDCC) form the EGF-like domain. The C2 domain maps to 397-519 (CHGSAVTTQD…CNLNHGHLKF (123 aa)). Ca(2+) is bound by residues Gly-429, Asp-430, Thr-433, Ala-434, Asp-436, Asp-484, Asp-486, Asp-490, Asp-491, and Asp-492. 2 disulfide bridges follow: Cys-497–Cys-510 and Cys-525–Cys-534. A glycan (N-linked (GlcNAc...) asparagine) is linked at Asn-549.

Belongs to the complement C6/C7/C8/C9 family. Monomer, as soluble protein. Homooligomer; homooligomerizes to form a pore-forming ring. Requires Ca(2+) as cofactor. N-glycosylated.

It is found in the cytolytic granule. The protein localises to the secreted. The protein resides in the cell membrane. Its subcellular location is the endosome lumen. Pore-forming protein that plays a key role in granzyme-mediated programmed cell death, and in defense against virus-infected or neoplastic cells. Plays an important role in killing other cells that are recognized as non-self by the immune system, e.g. in transplant rejection or some forms of autoimmune disease. Can insert into the membrane of target cells in its calcium-bound form, oligomerize and form large pores. Promotes cytolysis and apoptosis of target cells by mediating the passage and uptake of cytotoxic granzymes. Facilitates the delivery of cationic cargo protein, while anionic or neural proteins are not delivered efficiently. Perforin pores allow the release of mature caspase-7 (CASP7) into the extracellular milieu. The sequence is that of Perforin-1 (PRF1) from Homo sapiens (Human).